We begin with the raw amino-acid sequence, 309 residues long: Taste receptor type 2 member 8 (309 aa).

The Extracellular portion of the chain corresponds to methionine 1–asparagine 7. The helical transmembrane segment at isoleucine 8 to glycine 28 threads the bilayer. Residues leucine 29–asparagine 50 are Cytoplasmic-facing. Residues leucine 51–leucine 71 form a helical membrane-spanning segment. Over tyrosine 72–glutamine 82 the chain is Extracellular. A helical transmembrane segment spans residues isoleucine 83–leucine 103. The Cytoplasmic portion of the chain corresponds to asparagine 104–arginine 131. The chain crosses the membrane as a helical span at residues tryptophan 132 to leucine 152. Over serine 153–threonine 184 the chain is Extracellular. An N-linked (GlcNAc...) asparagine glycan is attached at asparagine 167. A helical transmembrane segment spans residues leucine 185–valine 205. Residues arginine 206 to leucine 239 are Cytoplasmic-facing. The chain crosses the membrane as a helical span at residues leucine 240–isoleucine 260. At threonine 261 to alanine 266 the chain is on the extracellular side. Residues methionine 267 to isoleucine 287 form a helical membrane-spanning segment. Topologically, residues leucine 288–threonine 309 are cytoplasmic.

Belongs to the G-protein coupled receptor T2R family.

Its subcellular location is the membrane. Its function is as follows. Receptor that may play a role in the perception of bitterness and is gustducin-linked. May play a role in sensing the chemical composition of the gastrointestinal content. The activity of this receptor may stimulate alpha gustducin, mediate PLC-beta-2 activation and lead to the gating of TRPM5. The sequence is that of Taste receptor type 2 member 8 (TAS2R8) from Papio hamadryas (Hamadryas baboon).